We begin with the raw amino-acid sequence, 415 residues long: MKAVEVLQRNSRGAFTVPAHGLYPYQWLWDSAFIALGWTQVDWERAWQELLCLFDYGQGPDGMLPHIVFHEQSRDYFPGPDVWGREARAQPATSGITQPPVVATVVRYLYEKDPDRDRARSRARYLFPKLLAYHRWLYHARDPYRTGLVVIVHPWESGMDNSPAWDKPLSRVPVENLPPYERRDVKHVNPEERPRKEDYDRYLSLLYLFRRLEYDPRGIYRQSPFKVVDVGFNAILQRANRDLYALAVLLQEDPYEIEEWIVRGEVGLEALWDREAGFYFSWDLVAGEPIAVKTSAGFLPLFAGTPHQGRASLLAQEAERWGEKARYLLPSVDPTSPFFEPGRYWRGPVWINVNWMVAEGFRDYGFAALAARLKADALALMEREGFREYYDPLTGQGRGGEGFSWSAALALFWTR.

Residues Y23, 27–30 (WLWD), Y76, Q98, and G158 each bind substrate. Catalysis depends on D160, which acts as the Proton donor. Substrate contacts are provided by residues R193 and 344-345 (YW). The Proton acceptor role is filled by E388.

The protein belongs to the glycosyl hydrolase 63 family. Homotetramer in solution.

It carries out the reaction (2R)-2-O-(alpha-D-mannosyl)-glycerate + H2O = D-mannose + (R)-glycerate. The enzyme catalyses (2R)-2-O-(alpha-D-glucopyranosyl)-glycerate + H2O = (R)-glycerate + D-glucose. Activity is not stimulated by divalent cations and not affected in the presence of EDTA. Hydrolase that catalyzes the hydrolysis of mannosylglycerate (MG), a solute produced in response to osmotic stress in thermophiles, into mannose and glycerate. Can also hydrolyze glucosylglycerate (GG) to glucose and glycerate, with similar catalytic efficiency. Is highly specific for MG and GG, and cannot use mannosylglyceramide (MGA), glucosylglycerol, mannosylglucosylglycerate (MGG), glucosylglucosylglycerate (GGG) or trehalose as substrates. In Thermus thermophilus (strain ATCC BAA-163 / DSM 7039 / HB27), this protein is Mannosylglycerate hydrolase.